The following is a 617-amino-acid chain: Mitochondrial Rho GTPase 2 (617 aa).

The Cytoplasmic segment spans residues 1–590 (MKRDVRILLL…LNGSDMSSTS (590 aa)). The 167-residue stretch at 2 to 168 (KRDVRILLLG…FYYAQKAVLH (167 aa)) folds into the Miro 1 domain. Positions 16, 17, 18, and 19 each coordinate GTP. Residue Thr-18 coordinates Mg(2+). A Mg(2+)-binding site is contributed by Asp-57. GTP-binding residues include Ser-59, Asn-118, Lys-119, Asp-121, Ala-149, and Lys-150. 2 consecutive EF-hand domains span residues 184–219 (QCVR…CFGN) and 304–339 (LGHQ…LPYM). Asp-197, Asp-199, Asp-201, Glu-208, Asp-317, Asp-319, Asp-321, and Glu-328 together coordinate Ca(2+). A Miro 2 domain is found at 416-578 (RTVFLCKVIG…YSKLTWAAMY (163 aa)). The GTP site is built by Gly-428, Gly-430, Lys-431, and Thr-432. The Mg(2+) site is built by Thr-432 and Glu-474. 2 residues coordinate GTP: Lys-528 and Asp-530. The chain crosses the membrane as a helical; Anchor for type IV membrane protein span at residues 591–613 (FWLRVTLGATIAAMLGFALYRAF). The Mitochondrial intermembrane portion of the chain corresponds to 614–617 (SRHK).

This sequence belongs to the mitochondrial Rho GTPase family. As to quaternary structure, homodimer.

The protein resides in the mitochondrion outer membrane. It carries out the reaction GTP + H2O = GDP + phosphate + H(+). It catalyses the reaction ATP + H2O = ADP + phosphate + H(+). The catalysed reaction is UTP + H2O = UDP + phosphate + H(+). Atypical mitochondrial nucleoside-triphosphatase (NTPase) involved in mitochondrial trafficking. Probably involved in control of anterograde transport of mitochondria and their subcellular distribution. Can hydrolyze GTP, ATP and UTP. This Danio rerio (Zebrafish) protein is Mitochondrial Rho GTPase 2 (rhot2).